The following is a 2510-amino-acid chain: Highly reducing polyketide synthase g433 (2510 aa).

A disordered region spans residues 1-54 (MAPGRTDVTVAENGNGLHTAHNGVSNGTSNGTNGTSHTSNGTNSSAKTTSNGVH). Positions 22-45 (NGVSNGTSNGTNGTSHTSNGTNSS) are enriched in low complexity. Residues 58–477 (DIPIAIVGMG…GANAHAVIDS (420 aa)) form the Ketosynthase family 3 (KS3) domain. Active-site for beta-ketoacyl synthase activity residues include cysteine 229, histidine 365, and histidine 400. The malonyl-CoA:ACP transacylase (MAT) domain stretch occupies residues 574–880 (FVFTGQGAQW…VPTLVRGQND (307 aa)). The segment at 942–1070 (HDLLGCQVFE…GQVKAGRADS (129 aa)) is N-terminal hotdog fold. A dehydratase (DH) domain region spans residues 942 to 1226 (HDLLGCQVFE…NLRLAPAADD (285 aa)). One can recognise a PKS/mFAS DH domain in the interval 942–1229 (HDLLGCQVFE…LAPAADDTGG (288 aa)). The active-site Proton acceptor; for dehydratase activity is the histidine 974. Residues 1083 to 1229 (PRKVSSTRWY…LAPAADDTGG (147 aa)) are C-terminal hotdog fold. Aspartate 1144 serves as the catalytic Proton donor; for dehydratase activity. Residues 1395–1574 (DFLGLVSHDK…FDGAEAVIYD (180 aa)) are methyltransferase (CMet) domain. The interval 1787-2097 (GSLKTLRWVQ…KGQHMGKLVI (311 aa)) is enoyl reductase (ER) (ER) domain. Residues 2122 to 2296 (SYLLVGGLGG…ASVLDISIIE (175 aa)) form a ketoreductase (KR) domain region. Positions 2419 to 2496 (SSVSFLANEI…KLGEAAAEGL (78 aa)) constitute a Carrier domain. At serine 2456 the chain carries O-(pantetheine 4'-phosphoryl)serine.

It participates in mycotoxin biosynthesis. In terms of biological role, highly reducing polyketide synthase; part of the gene cluster that mediates the biosynthesis of 1233A, a natural compound known as an inhibitor of HMG-CoA synthase in the mevalonate pathway and with antibacterial and antifungal activities. The highly reducing polyketide synthase g433 gene is responsible for the 1233A backbone biosynthesis and the cytochrome P450 monooxygenase g430 catalyzes oxidation of the backbone. The chain is Highly reducing polyketide synthase g433 from Fusarium sp.